The primary structure comprises 31 residues: MEAFSYTLLMALAAVTLFFAVAFRDPPKFDK.

The helical transmembrane segment at 3-23 (AFSYTLLMALAAVTLFFAVAF) threads the bilayer.

The protein belongs to the PsbT family. In terms of assembly, PSII is composed of 1 copy each of membrane proteins PsbA, PsbB, PsbC, PsbD, PsbE, PsbF, PsbH, PsbI, PsbJ, PsbK, PsbL, PsbM, PsbT, PsbX, PsbY, Psb30/Ycf12, peripheral proteins PsbO, CyanoQ (PsbQ), PsbU, PsbV and a large number of cofactors. It forms dimeric complexes.

The protein resides in the cellular thylakoid membrane. Functionally, found at the monomer-monomer interface of the photosystem II (PS II) dimer, plays a role in assembly and dimerization of PSII. PSII is a light-driven water plastoquinone oxidoreductase, using light energy to abstract electrons from H(2)O, generating a proton gradient subsequently used for ATP formation. The polypeptide is Photosystem II reaction center protein T (Prochlorococcus marinus (strain MIT 9211)).